The primary structure comprises 489 residues: Protein SOF1 (489 aa).

WD repeat units lie at residues 65–105 (GHRD…EFVS), 113–158 (VTGL…YSNK), 177–214 (DGES…PVSD), 217–257 (WGAD…PTQK), 259–299 (VQTM…RSLN), 303–342 (DHVS…SREI), and 346–385 (KRMQ…RSNV). Basic and acidic residues-rich tracts occupy residues 440 to 459 (REAN…ERKK) and 466 to 489 (HKYE…TQEK). The interval 440–489 (REANERRTRKDMPYISERKKQIVGTVHKYEDSGRDRKRRKEDDKRDTQEK) is disordered.

This sequence belongs to the WD repeat DCAF13/WDSOF1 family. As to quaternary structure, interacts with snoRNA U3. Interacts with NOP1 and MPP10. Component of the ribosomal small subunit (SSU) processome composed of at least 40 protein subunits and snoRNA U3.

It is found in the nucleus. Its subcellular location is the nucleolus. In terms of biological role, required for ribosomal RNA processing. The chain is Protein SOF1 (SOF1) from Saccharomyces cerevisiae (strain ATCC 204508 / S288c) (Baker's yeast).